The chain runs to 258 residues: Polysialic acid transport protein KpsM (258 aa).

The region spanning 30–251 (LGYLWAILEP…FIGLALYRTR (222 aa)) is the ABC transmembrane type-2 domain. 6 helical membrane passes run 33-53 (LWAILEPSAHLLILLGIFGYI), 61-81 (ISFPVFLLNGLIPFFIFSSIS), 110-130 (ALLETLIYVAVYILLMLIVWM), 144-164 (VLTWSLLIILSCGIGLIFMVV), 175-195 (LPILLKPLYFISCIMFPLHSI), and 227-247 (GVSLNYLAMFTLVTLFIGLAL).

It belongs to the ABC-2 integral membrane protein family.

The protein localises to the cell inner membrane. In terms of biological role, kpsM and KpsT constitute a system for the transport of polysialic acid across the cytoplasmic membrane. The polypeptide is Polysialic acid transport protein KpsM (kpsM) (Escherichia coli).